Consider the following 278-residue polypeptide: Shikimate dehydrogenase (NADP(+)) (278 aa).

Residues 19–21 (SRS) and threonine 66 contribute to the shikimate site. Residue lysine 70 is the Proton acceptor of the active site. Aspartate 82 contributes to the NADP(+) binding site. Asparagine 91 and aspartate 107 together coordinate shikimate. Residues 133-137 (GAGGA), 157-162 (NRTRAK), and isoleucine 222 contribute to the NADP(+) site. Tyrosine 224 is a shikimate binding site. Residue glycine 245 participates in NADP(+) binding.

Belongs to the shikimate dehydrogenase family. Homodimer.

The catalysed reaction is shikimate + NADP(+) = 3-dehydroshikimate + NADPH + H(+). It functions in the pathway metabolic intermediate biosynthesis; chorismate biosynthesis; chorismate from D-erythrose 4-phosphate and phosphoenolpyruvate: step 4/7. In terms of biological role, involved in the biosynthesis of the chorismate, which leads to the biosynthesis of aromatic amino acids. Catalyzes the reversible NADPH linked reduction of 3-dehydroshikimate (DHSA) to yield shikimate (SA). The protein is Shikimate dehydrogenase (NADP(+)) of Dinoroseobacter shibae (strain DSM 16493 / NCIMB 14021 / DFL 12).